The following is a 94-amino-acid chain: Large ribosomal subunit protein bL25 (94 aa).

The protein belongs to the bacterial ribosomal protein bL25 family. As to quaternary structure, part of the 50S ribosomal subunit; part of the 5S rRNA/L5/L18/L25 subcomplex. Contacts the 5S rRNA. Binds to the 5S rRNA independently of L5 and L18.

Functionally, this is one of the proteins that binds to the 5S RNA in the ribosome where it forms part of the central protuberance. The protein is Large ribosomal subunit protein bL25 of Edwardsiella ictaluri (strain 93-146).